A 789-amino-acid chain; its full sequence is SWI5-dependent HO expression protein 4 (789 aa).

Ser-18 carries the phosphoserine modification.

The protein resides in the cytoplasm. Its function is as follows. Required for mother cell-specific ho expression. Might be required for the transport of factors (such as ASH1) that promote HO repression from the mother cell into its bud. This chain is SWI5-dependent HO expression protein 4 (SHE4), found in Saccharomyces cerevisiae (strain ATCC 204508 / S288c) (Baker's yeast).